A 128-amino-acid polypeptide reads, in one-letter code: Glyoxylase-like domain-containing protein (128 aa).

In terms of domain architecture, VOC spans 6 to 125 (QISGIEIPAT…EGNTHAICTR (120 aa)).

Its pathway is mycotoxin biosynthesis. Functionally, glyoxylase-like domain-containing protein; part of the gene cluster that mediates the biosynthesis of the selective antifungal agent ascochitine, an o-quinone methide that plays a possible protective role against other microbial competitors in nature and is considered to be important for pathogenicity of legume-associated Didymella species. The pathway probably begins with the synthesis of a keto-aldehyde intermediate by the ascochitine non-reducing polyketide synthase pksAC from successive condensations of 4 malonyl-CoA units, presumably with a simple acetyl-CoA starter unit. Release of the keto-aldehyde intermediate is consistent with the presence of the C-terminal reductive release domain. The HR-PKS (orf7) probably makes a diketide starter unit which is passed to the non-reducing polyketide synthase pksAC for further extension, producing ascochital and ascochitine. The aldehyde dehydrogenase (orf1), the 2-oxoglutarate-dependent dioxygenase (orf3) and the dehydrogenase (orf9) are probably involved in subsequent oxidations of methyl groups to the carboxylic acid of the heterocyclic ring. The ascochitine gene cluster also includes a gene encoding a short peptide with a cupin domain (orf2) that is often found in secondary metabolite gene clusters and which function has still to be determined. In Didymella fabae (Leaf and pod spot disease fungus), this protein is Glyoxylase-like domain-containing protein.